The following is a 340-amino-acid chain: Ribonucleoside-diphosphate reductase small subunit (340 aa).

Fe cation contacts are provided by Asp-94, Glu-124, and His-127. The active site involves Tyr-131. A helical transmembrane segment spans residues 180-200 (FILMILIEGIFFAASFAAIAY). Residues Glu-187, Glu-221, and His-224 each coordinate Fe cation.

Belongs to the ribonucleoside diphosphate reductase small chain family. As to quaternary structure, heterotetramer composed of a homodimer of the large subunit (R1) and a homodimer of the small subunit (R2). Larger multisubunit protein complex are also active, composed of (R1)n(R2)n. The cofactor is Fe cation.

The protein localises to the host membrane. It carries out the reaction a 2'-deoxyribonucleoside 5'-diphosphate + [thioredoxin]-disulfide + H2O = a ribonucleoside 5'-diphosphate + [thioredoxin]-dithiol. Ribonucleoside-diphosphate reductase holoenzyme provides the precursors necessary for viral DNA synthesis. Allows virus growth in non-dividing cells, as well as reactivation from latency in infected hosts. Catalyzes the biosynthesis of deoxyribonucleotides from the corresponding ribonucleotides. The polypeptide is Ribonucleoside-diphosphate reductase small subunit (Human herpesvirus 1 (strain KOS) (HHV-1)).